The chain runs to 144 residues: Cytochrome c oxidase subunit 4 isoform 1, mitochondrial (144 aa).

Topologically, residues 1–73 (SVVKSEDFSL…SFAEMNRGSN (73 aa)) are mitochondrial matrix. N6-acetyllysine; alternate is present on Lys4. Lys4 bears the N6-succinyllysine; alternate mark. Lys28 bears the N6-acetyllysine mark. Phosphoserine is present on residues Ser31 and Ser33. Position 35 is an N6-acetyllysine; alternate (Lys35). Lys35 carries the post-translational modification N6-succinyllysine; alternate. Lys42 carries the post-translational modification N6-acetyllysine. The chain crosses the membrane as a helical span at residues 74–99 (EWKTVVGGAMFFIGFTALVIMWQKHY). The Mitochondrial intermembrane segment spans residues 100 to 144 (VYGPLPQSFDKEWVAKQTKRMLDMKVNPIQGLASKWDYEKNEWKK).

The protein belongs to the cytochrome c oxidase IV family. In terms of assembly, component of the cytochrome c oxidase (complex IV, CIV), a multisubunit enzyme composed of 14 subunits. The complex is composed of a catalytic core of 3 subunits MT-CO1, MT-CO2 and MT-CO3, encoded in the mitochondrial DNA, and 11 supernumerary subunits COX4I, COX5A, COX5B, COX6A, COX6B, COX6C, COX7A, COX7B, COX7C, COX8 and NDUFA4, which are encoded in the nuclear genome. The complex exists as a monomer or a dimer and forms supercomplexes (SCs) in the inner mitochondrial membrane with NADH-ubiquinone oxidoreductase (complex I, CI) and ubiquinol-cytochrome c oxidoreductase (cytochrome b-c1 complex, complex III, CIII), resulting in different assemblies (supercomplex SCI(1)III(2)IV(1) and megacomplex MCI(2)III(2)IV(2)). Interacts with PHB2; the interaction decreases in absence of SPHK2. Interacts with AFG1L. Interacts with ABCB7; this interaction allows the regulation of cellular iron homeostasis and cellular reactive oxygen species (ROS) levels in cardiomyocytes. Interacts with FLVCR2; this interaction occurs in the absence of heme and is disrupted upon heme binding. Interacts with IRGC.

The protein resides in the mitochondrion inner membrane. Its pathway is energy metabolism; oxidative phosphorylation. Its function is as follows. Component of the cytochrome c oxidase, the last enzyme in the mitochondrial electron transport chain which drives oxidative phosphorylation. The respiratory chain contains 3 multisubunit complexes succinate dehydrogenase (complex II, CII), ubiquinol-cytochrome c oxidoreductase (cytochrome b-c1 complex, complex III, CIII) and cytochrome c oxidase (complex IV, CIV), that cooperate to transfer electrons derived from NADH and succinate to molecular oxygen, creating an electrochemical gradient over the inner membrane that drives transmembrane transport and the ATP synthase. Cytochrome c oxidase is the component of the respiratory chain that catalyzes the reduction of oxygen to water. Electrons originating from reduced cytochrome c in the intermembrane space (IMS) are transferred via the dinuclear copper A center (CU(A)) of subunit 2 and heme A of subunit 1 to the active site in subunit 1, a binuclear center (BNC) formed by heme A3 and copper B (CU(B)). The BNC reduces molecular oxygen to 2 water molecules using 4 electrons from cytochrome c in the IMS and 4 protons from the mitochondrial matrix. The polypeptide is Cytochrome c oxidase subunit 4 isoform 1, mitochondrial (COX4I1) (Pan troglodytes (Chimpanzee)).